A 277-amino-acid chain; its full sequence is S-formylglutathione hydrolase FrmB (277 aa).

Active-site charge relay system residues include S145, D221, and H254.

This sequence belongs to the esterase D family.

It carries out the reaction S-formylglutathione + H2O = formate + glutathione + H(+). In terms of biological role, serine hydrolase involved in the detoxification of formaldehyde. Hydrolyzes S-formylglutathione to glutathione and formate. This chain is S-formylglutathione hydrolase FrmB (frmB), found in Escherichia coli O6:K15:H31 (strain 536 / UPEC).